The primary structure comprises 89 residues: Large ribosomal subunit protein bL27 (89 aa).

Residues 1–24 (MAHKKGTGSTRNGRDSNAKRLGVK) are disordered.

The protein belongs to the bacterial ribosomal protein bL27 family.

The sequence is that of Large ribosomal subunit protein bL27 from Synechococcus sp. (strain JA-2-3B'a(2-13)) (Cyanobacteria bacterium Yellowstone B-Prime).